We begin with the raw amino-acid sequence, 499 residues long: Glucose-6-phosphate isomerase (499 aa).

Catalysis depends on glutamate 352, which acts as the Proton donor. Active-site residues include histidine 383 and lysine 487.

Belongs to the GPI family.

The protein localises to the cytoplasm. It carries out the reaction alpha-D-glucose 6-phosphate = beta-D-fructose 6-phosphate. It participates in carbohydrate biosynthesis; gluconeogenesis. The protein operates within carbohydrate degradation; glycolysis; D-glyceraldehyde 3-phosphate and glycerone phosphate from D-glucose: step 2/4. Its function is as follows. Catalyzes the reversible isomerization of glucose-6-phosphate to fructose-6-phosphate. This chain is Glucose-6-phosphate isomerase, found in Legionella pneumophila (strain Paris).